The chain runs to 165 residues: Peptidyl-prolyl cis-trans isomerase A (165 aa).

N-acetylmethionine is present on methionine 1. Residue valine 2 is modified to N-acetylvaline; in Peptidyl-prolyl cis-trans isomerase A, N-terminally processed. Positions 7-163 (FFDIAVDGEP…KKITIADCGQ (157 aa)) constitute a PPIase cyclophilin-type domain. N6-acetyllysine; alternate is present on lysine 28. Lysine 28 participates in a covalent cross-link: Glycyl lysine isopeptide (Lys-Gly) (interchain with G-Cter in SUMO2); alternate. A Glycyl lysine isopeptide (Lys-Gly) (interchain with G-Cter in ubiquitin); alternate cross-link involves residue lysine 28. Residues lysine 44 and lysine 76 each carry the N6-acetyllysine modification. Serine 77 bears the Phosphoserine mark. Position 82 is an N6-acetyllysine; alternate (lysine 82). Lysine 82 is covalently cross-linked (Glycyl lysine isopeptide (Lys-Gly) (interchain with G-Cter in SUMO2); alternate). Threonine 93 carries the post-translational modification Phosphothreonine. Asparagine 108 carries N-linked (GlcNAc...) asparagine glycosylation. N6-acetyllysine occurs at positions 125, 131, and 133.

Belongs to the cyclophilin-type PPIase family. PPIase A subfamily. Interacts with protein phosphatase PPP3CA/calcineurin A. Interacts with isoform 2 of BSG/CD147. Interacts with FOXO1; the interaction promotes FOXO1 dephosphorylation, nuclear accumulation and transcriptional activity. Interacts with integrin ITGA2B:ITGB3; the interaction is ROS and peptidyl-prolyl cis-trans isomerase (PPIase) activity-dependent and is increased in the presence of thrombin. Interacts with MAP3K5. Interacts with TARDBP; the interaction is dependent on the RNA-binding activity of TARDBP and the PPIase activity of PPIA/CYPA and the acetylation of PPIA/CYPA at Lys-125 favors the interaction. Interacts with HNRNPA1, HNRNPA2B1, HNRNPC, RBMX, HNRNPK and HNRNPM. Acetylation at Lys-125 markedly inhibits catalysis of cis to trans isomerization. PPIA acetylation also antagonizes the immunosuppressive effects of cyclosporine by inhibiting the sequential steps of cyclosporine binding and calcineurin inhibition. Acetylation at Lys-125 favors the interaction with TARDBP.

The protein resides in the cytoplasm. Its subcellular location is the secreted. It is found in the nucleus. The enzyme catalyses [protein]-peptidylproline (omega=180) = [protein]-peptidylproline (omega=0). Its activity is regulated as follows. Binds cyclosporin A (CsA). CsA mediates some of its effects via an inhibitory action on PPIase. In terms of biological role, catalyzes the cis-trans isomerization of proline imidic peptide bonds in oligopeptides. Exerts a strong chemotactic effect on leukocytes partly through activation of one of its membrane receptors BSG/CD147, initiating a signaling cascade that culminates in MAPK/ERK activation. Activates endothelial cells (ECs) in a proinflammatory manner by stimulating activation of NF-kappa-B and ERK, JNK and p38 MAP-kinases and by inducing expression of adhesion molecules including SELE and VCAM1. Induces apoptosis in ECs by promoting the FOXO1-dependent expression of CCL2 and BCL2L11 which are involved in EC chemotaxis and apoptosis. In response to oxidative stress, initiates proapoptotic and antiapoptotic signaling in ECs via activation of NF-kappa-B and AKT1 and up-regulation of antiapoptotic protein BCL2. Negatively regulates MAP3K5/ASK1 kinase activity, autophosphorylation and oxidative stress-induced apoptosis mediated by MAP3K5/ASK1. Necessary for the assembly of TARDBP in heterogeneous nuclear ribonucleoprotein (hnRNP) complexes and regulates TARDBP binding to RNA UG repeats and TARDBP-dependent expression of HDAC6, ATG7 and VCP which are involved in clearance of protein aggregates. Plays an important role in platelet activation and aggregation. Regulates calcium mobilization and integrin ITGA2B:ITGB3 bidirectional signaling via increased ROS production as well as by facilitating the interaction between integrin and the cell cytoskeleton. Binds heparan sulfate glycosaminoglycans. This chain is Peptidyl-prolyl cis-trans isomerase A (PPIA), found in Symphalangus syndactylus (Siamang).